A 260-amino-acid polypeptide reads, in one-letter code: HTH-type transcriptional repressor NanR (260 aa).

The tract at residues 1–22 (MNAFDSQAEDSPTSLGRSLRRR) is disordered. The 69-residue stretch at 27–95 (KKLSEMVEEE…NGERARVSRP (69 aa)) folds into the HTH gntR-type domain. Residues 55–74 (ERELMAFFNVGRPSVREALA) constitute a DNA-binding region (H-T-H motif).

It belongs to the NanR family.

Functionally, transcriptional repressor that controls expression of the genes required for the catabolism of sialic acids. The chain is HTH-type transcriptional repressor NanR from Salmonella newport (strain SL254).